A 513-amino-acid chain; its full sequence is Histidine ammonia-lyase (513 aa).

Residues 144 to 146 (ASG) constitute a cross-link (5-imidazolinone (Ala-Gly)). Ser-145 carries the post-translational modification 2,3-didehydroalanine (Ser).

Belongs to the PAL/histidase family. Contains an active site 4-methylidene-imidazol-5-one (MIO), which is formed autocatalytically by cyclization and dehydration of residues Ala-Ser-Gly.

The protein resides in the cytoplasm. The enzyme catalyses L-histidine = trans-urocanate + NH4(+). Its pathway is amino-acid degradation; L-histidine degradation into L-glutamate; N-formimidoyl-L-glutamate from L-histidine: step 1/3. The protein is Histidine ammonia-lyase of Streptococcus sanguinis (strain SK36).